Reading from the N-terminus, the 2228-residue chain is MNMSRQGIFQTVGSGLDHILSLADVEEEQMIQSVDRTAVTGASYFTSVDQSSVHTAEVGAHQSEPLKTSVDKPGSKRTQGEKFFLIHSADWLTTHALFHEVAKLDVVKLLYNEQFAVQGLLRYHTYARFGIEIQVQINPTPFQQGGLICAMVPGDQSYGSIASLTVYPHGLLNCNINNVVRIKVPFIYTRGAYHFKDPQYPVWELTIRVWSELNIGTGTSAYTSLNVLARFTDLELHGLTPLSTQMMRNEFRVSTTENVVNLSNYEDARAKMSFALDQEDWKSDASQGGGIKITHFTTWTSIPTLAAQFPFNASDSVGQQIKVIPVDPYFFQMTNTNPEQKCITALASICQMFCFWRGDLVFDFQVFPTKYHSGRLLFCFVPGNELIDVSHITLKQATTAPCAVMDITGVQSTLRFRVPWISDTPYRVNRYTKSSHQKGEYTAIGKLIVYCYNRLTSPSNVASHVRVNVYLSAINLECFAPLYHAMDVTTQVGDDSGGFSTTVSTKQNVPDPQVGITTVRDLKGKANQGKMDVSGVQAPVGAITTIEDPVLAKKVPETFPELKPGESRHTSDHMSIYKFMGRSHFLCTFTFNSNNKEYTFPITLSSTSNPPHGLPSTLRWFFNLFQLYRGPLDLTIIITGATDVDGMAWFTPVGLAVDTPWVEKESALSIDYKTALGAVRFNTRRTGNIQIRLPWYSYLYAVSGALDGLGDKTDSTFGLVSIQIANYNHSDEYLSFSCYLSVTEQSEFYFPRAPLNTNAMMSSETMLDRIALGDLESSVDDPRSEEDRKFESHIEKRKPYKELRLEVGKQRLKYAQEELSNEVLPPPRKIKGVFSQAKISLFYTEDHEIMKFSWKGITADTRALRRFGFSLAAGRSVWTLEMDAGVLTGRLVRVNDEKWTEMKDDKIVSLVEKFTSNKHWSKINFPHGMLDLEEIAANSKEFPNMSETDLCFLLHWLNPKKINLADRMLGMSGIQEIKEKGVGLIGECRAFLDSITTTLKSMMFGFHHSVTVEIINTVLCFVKSGILLYVIQQLNQEEHSHIIGLLRVMNYADIGCSVISCGKVFSKMLETVFNWQMDSRMMELRTQSISNWLRDICSGITIFKSFKDAIYWLYTRIREYYDVNYGNKKDVLNILKDNQQKIERAIEEADNFCVLQIQDVEKFEQYQKGVDLIQKLRTVHSMAQVDPGLTVHLAPLRDCIARVHQKLKNLGSINQAMVTRCEPVVCYLYGKRGGGKSLTSIALATKICKHYGVEPEKNIYTKPVASDYWDGYSGQLVCIIDDIGQNTTDEDWSDFCQLVSGCPMRLNMASLEEKGRHFSSPFIIATSNWSNPSPKTVYVKEAIDRRLHFKVEVKPASFFKNPHNDMLNVNLAKTNDAIKDMSCVDLVMDSHNISLSELLSSLVMTVEIRKQNMSEFMELWSQGMSDDDNDSAVAEFFQSFPSGEPSGSKLSRFFQSVTNHKWVAVGAAVGVLGVLVGGWYVYKHFTKKKEEPIPSEGVYHGVTKPKQVIKLDADPVESQSTLEIAGLVRKNLVQFGVGEKNGCVRWVMNALGIKDDWLLVPSHAYKFEKDYEMMEFYFNRGGTYYSISAGNVVIQSLDVGFQDVVLMKVPTIPKFRDITEHFIKKSDVPRALNRLATLVTTVNGTPMLISEGPLKMEEKATYVHKKNDGTTIDLTVDQAWRGKGEGLPGMCGGALISSNQSIQNAILGIHVAGGNSILVAKLVTQEMFQNIDKKIVESQRIMKVEFTQCSMNVVSKTLFKKSPIHHHIDKNMINFPAVMPFSRAEIDPMAVMLSKYSLPIVDEPEDYKDVSVFFQNKILGKSPLVDDFLDIEMAITGAPGIDAINMDSSPGYPYVQEKLTKRDLIWLDDNGMFLGVHPRLAQRILFNTTMMENCSDLDVVFTTCPKDELRPLDKVLESKTRAIDSCPLDYTILCRMYWGPAISYFHLNPGFHTGVAIGIDPDRQWDQLFKTMIRFGDVGLDLDFSAFDASLSPFMIREAGRILTEMSGAPNHFGEALINTIIYSKHLLYNCCYHVYGSMPSGSPCTALLNSIINNVNLYYVFSKIFKKSPVFFCDAIRILCYGDDVLIVFSRQVQFDNLDSIGQRIVDEFRKLGMTATSADKSVPQLKPVSELTFLKRSFNLVDDRIRPAIAEKTIWSLVAWQRSNAEFEQNLENAQWFAFMHGYEFYQDFYHFVQSCLEKEMIEYRLKSYDWWRMKFNDQCFVCDLS.

The disordered stretch occupies residues 56-76 (AEVGAHQSEPLKTSVDKPGSK). 2 short sequence motifs ((L)YPX(n)L motif) span residues 167 to 171 (YPHGL) and 200 to 205 (YPVWEL). Residues 766 to 836 (MLDRIALGDL…PRKIKGVFSQ (71 aa)) are involved in P1-2A pentamerization. Residues 1011 to 1031 (TVEIINTVLCFVKSGILLYVI) form a helical membrane-spanning segment. The segment at 1043–1070 (IGLLRVMNYADIGCSVISCGKVFSKMLE) is membrane-penetrating ability. A coiled-coil region spans residues 1127 to 1152 (NKKDVLNILKDNQQKIERAIEEADNF). Positions 1204–1366 (HQKLKNLGSI…SFFKNPHNDM (163 aa)) constitute an SF3 helicase domain. 1230-1237 (GKRGGGKS) contacts ATP. Residues 1462 to 1482 (WVAVGAAVGVLGVLVGGWYVY) form a helical membrane-spanning segment. Residue Tyr1499 is modified to O-(5'-phospho-RNA)-tyrosine. Residues 1514–1728 (DPVESQSTLE…VAKLVTQEMF (215 aa)) enclose the Peptidase C3 domain. Active-site for protease 3C activity residues include His1563, Asp1603, and Cys1691. The RdRp catalytic domain maps to 1977–2098 (DVGLDLDFSA…VFSRQVQFDN (122 aa)).

The protein belongs to the picornaviridae polyprotein family. Homodimer. Homomultimer; probably interacts with membranes in a multimeric form. Seems to assemble into amyloid-like fibers. In terms of assembly, homodimer. Monomer. Interacts with protein 3CD. As to quaternary structure, interacts with host ACBD3. Interacts with protein 3AB. In terms of assembly, interacts with human MAVS. As to quaternary structure, homodimer; disulfide-linked. Homopentamer. Homooligomer. In terms of assembly, interacts with capsid protein VP2. Interacts with capsid protein VP3. As to quaternary structure, interacts with capsid protein VP1. Interacts with capsid protein VP3. Interacts with capsid protein VP1. Interacts with capsid protein VP2. Specific enzymatic cleavages by viral protease in vivo yield a variety of precursors and mature proteins. Polyprotein processing intermediates are produced, such as P1-2A which is a functional precursor of the structural proteins, VP0 which is a VP4-VP2 precursor, VP1-2A precursor, 3ABC precursor which is a stable and catalytically active precursor of 3A, 3B and 3C proteins, 3AB and 3CD precursors. The assembly signal 2A is removed from VP1-2A by a host protease, possibly host Cathepsin L. This cleavage occurs over a region of 3 amino-acids probably generating VP1 proteins with heterogeneous C-termini. Post-translationally, during virion maturation, immature virions are rendered infectious following cleavage of VP0 into VP4 and VP2. This maturation seems to be an autocatalytic event triggered by the presence of RNA in the capsid and is followed by a conformational change of the particle. In terms of processing, the assembly signal 2A is removed from VP1-2A by a host protease, possibly host Cathepsin L in naked virions. This cleavage does not occur in enveloped virions. This cleavage occurs over a region of 3 amino-acids probably generating VP1 proteins with heterogeneous C-termini. VPg is uridylylated prior to priming replication into VPg-pUpU. Post-translationally, unlike other picornaviruses, does not seem to be myristoylated.

It localises to the virion. It is found in the host endosome. The protein localises to the host multivesicular body. The protein resides in the host membrane. Its subcellular location is the host mitochondrion outer membrane. It localises to the host cytoplasm. It is found in the host cytoplasmic vesicle membrane. The catalysed reaction is RNA(n) + a ribonucleoside 5'-triphosphate = RNA(n+1) + diphosphate. It carries out the reaction a ribonucleoside 5'-triphosphate + H2O = a ribonucleoside 5'-diphosphate + phosphate + H(+). The enzyme catalyses Selective cleavage of Gln-|-Gly bond in the poliovirus polyprotein. In other picornavirus reactions Glu may be substituted for Gln, and Ser or Thr for Gly.. Capsid proteins VP1, VP2, and VP3 form a closed capsid enclosing the viral positive strand RNA genome. All these proteins contain a beta-sheet structure called beta-barrel jelly roll. Together they form an icosahedral capsid (T=3) composed of 60 copies of each VP1, VP2, and VP3, with a diameter of approximately 300 Angstroms. VP1 is situated at the 12 fivefold axes, whereas VP2 and VP3 are located at the quasi-sixfold axes. The naked capsid interacts with the host receptor HAVCR1 to provide virion attachment to and probably entry into the target cell. Its function is as follows. VP0 precursor is a component of the immature procapsids. In terms of biological role, plays a role in the assembly of the 12 pentamers into an icosahedral structure. Has not been detected in mature virions, supposedly owing to its small size. Functionally, precursor component of immature procapsids that corresponds to an extended form of the structural protein VP1. After maturation, possibly by the host Cathepsin L, the assembly signal 2A is cleaved to give rise to the mature VP1 protein. Functions as a viroporin. Affects membrane integrity and causes an increase in membrane permeability. Involved in host intracellular membrane rearrangements probably to give rise to the viral factories. Does not disrupt calcium homeostasis or glycoprotein trafficking. Antagonizes the innate immune response of the host by suppressing IFN-beta synthesis, which it achieves by interfering with the RIG-I/IFIH1 pathway. Its function is as follows. Affects membrane integrity and causes an increase in membrane permeability. In terms of biological role, associates with and induces structural rearrangements of intracellular membranes. Displays RNA-binding activity. Functionally, the precursor 3ABC is targeted to the mitochondrial membrane where protease 3C activity cleaves and inhibits the host antiviral protein MAVS, thereby disrupting activation of IRF3 through the IFIH1/MDA5 pathway. In vivo, the protease activity of 3ABC precursor is more efficient in cleaving the 2BC precursor than that of protein 3C. The 3ABC precursor may therefore play a role in the proteolytic processing of the polyprotein. Possible viroporin. Interacts with the 3CD precursor and with RNA structures found at both the 5'- and 3'-termini of the viral genome. Since the 3AB precursor contains the hydrophobic domain 3A, it probably anchors the whole viral replicase complex to intracellular membranes on which viral RNA synthesis occurs. Its function is as follows. May serve as membrane anchor to the 3AB and 3ABC precursors via its hydrophobic domain. May interact with RNA. In terms of biological role, acts as a primer for viral RNA replication and remains covalently bound to viral genomic RNA. VPg is uridylylated prior to priming replication into VPg-pUpU. The VPg-pUpU is then used as primer on the genomic RNA poly(A) by the RNA-dependent RNA polymerase to replicate the viral genome. Functionally, cysteine protease that generates mature viral proteins from the precursor polyprotein. In addition to its proteolytic activity, it binds to viral RNA, and thus influences viral genome replication. RNA and substrate bind cooperatively to the protease. Cleaves IKBKG/NEMO to impair innate immune signaling. Cleaves host PABPC1 which may participate in the switch of viral translation to RNA synthesis. Interacts with the 3AB precursor and with RNA structures found at both the 5'- and 3'-termini of the viral genome. Disrupts TLR3 signaling by degrading the host adapter protein TICAM1/TRIF. Its function is as follows. RNA-directed RNA polymerase 3D-POL replicates genomic and antigenomic RNA by recognizing replications specific signals. The protein is Genome polyprotein of Cercopithecus hamlyni (Owl-faced monkey).